We begin with the raw amino-acid sequence, 224 residues long: Probable GTP-binding protein EngB (224 aa).

In terms of domain architecture, EngB-type G spans 31–205 (IGVEIAFAGR…LSILNDWCHP (175 aa)). GTP contacts are provided by residues 39–46 (GRSNAGKS), 66–70 (GRTQL), 84–87 (DLPG), 151–154 (TKSD), and 184–186 (LSS). 2 residues coordinate Mg(2+): Ser-46 and Thr-68.

This sequence belongs to the TRAFAC class TrmE-Era-EngA-EngB-Septin-like GTPase superfamily. EngB GTPase family. Mg(2+) is required as a cofactor.

Its function is as follows. Necessary for normal cell division and for the maintenance of normal septation. The chain is Probable GTP-binding protein EngB from Shewanella frigidimarina (strain NCIMB 400).